The primary structure comprises 5100 residues: Hemicentin-2 (5100 aa).

The N-terminal stretch at 1 to 19 is a signal peptide; the sequence is MTPGAQLLPLLVAISTAVA. Residues 37–211 enclose the VWFA domain; that stretch reads DATLAFVFDV…QVSEVLKWVE (175 aa). N330, N347, N380, N479, N526, N548, and N675 each carry an N-linked (GlcNAc...) asparagine glycan. Ig-like C2-type domains follow at residues 426-515, 517-601, 609-692, 699-782, 787-877, 882-968, 973-1058, 1063-1156, 1161-1239, 1246-1335, 1340-1437, 1442-1531, 1536-1624, 1629-1717, 1722-1810, 1825-1913, 1920-2008, 2011-2100, 2105-2189, 2196-2285, 2290-2379, 2384-2473, 2478-2566, 2571-2662, 2667-2758, 2781-2871, 2875-2964, 2971-3058, 3063-3153, 3157-3245, 3250-3340, 3345-3432, 3438-3523, 3528-3609, 3614-3702, 3707-3793, 3798-3886, 3891-3977, 3982-4067, 4071-4158, 4163-4244, 4252-4336, and 4343-4428; these read PGVP…IVIT, PPPQ…RATT, PQVS…ETVT, PSVS…IQLV, PRLT…LVVT, PQIA…VELV, PRIH…MWLS, PMIK…YVLR, PQVQ…WKLE, PHWG…AKLV, PSIR…FNLA, PSLL…FQLS, PTIW…TSLE, PTIE…YSVE, PQLL…VEVS, SAHH…KDVT, PNIE…LRVN, PRIT…VILQ, PSIL…KHFN, PAFP…QSLE, PQVT…FALS, PHLT…FSVE, PSIE…TQLS, PTIL…YHVE, PSIS…QDFN, PHEE…YELL, PPVI…KLFT, PQIS…VQLN, PSFK…FVLA, PPTF…FVVS, PQIQ…HTVN, PTIK…RNFT, PPIL…FQLT, PHIE…FRVR, PNVV…FRVE, PTIQ…LDLR, PAIA…YQVT, PTIA…MVLT, PVVK…TRLV, PPVI…VHLT, PVLT…QAVS, PVLQ…KVVT, and PVFQ…ALLA. C449 and C497 are disulfide-bonded. 6 cysteine pairs are disulfide-bonded: C539/C588, C630/C678, C720/C766, C808/C859, C903/C952, and C994/C1042. Omega-N-methylarginine occurs at positions 909, 914, and 915. 2 N-linked (GlcNAc...) asparagine glycosylation sites follow: N1024 and N1068. Intrachain disulfides connect C1091–C1140 and C1182–C1225. N1264 carries N-linked (GlcNAc...) asparagine glycosylation. The interval 1265-1293 is disordered; the sequence is ASLPCPAQGTPKPRITWRRGPSSEPLNGR. C1269 and C1319 form a disulfide bridge. Residue N1350 is glycosylated (N-linked (GlcNAc...) asparagine). 2 disulfides stabilise this stretch: C1363–C1421 and C1465–C1515. Residue N1542 is glycosylated (N-linked (GlcNAc...) asparagine). Disulfide bonds link C1559–C1608, C1653–C1701, C1745–C1794, and C1846–C1899. 2 N-linked (GlcNAc...) asparagine glycosylation sites follow: N1676 and N1787. N-linked (GlcNAc...) asparagine glycosylation occurs at N1934. Intrachain disulfides connect C1941–C1990 and C2033–C2084. N-linked (GlcNAc...) asparagine glycans are attached at residues N2034, N2113, and N2119. 2 cysteine pairs are disulfide-bonded: C2126/C2175 and C2218/C2269. N2309, N2315, N2345, and N2395 each carry an N-linked (GlcNAc...) asparagine glycan. The cysteines at positions 2314 and 2363 are disulfide-linked. C2408 and C2457 are joined by a disulfide. N-linked (GlcNAc...) asparagine glycans are attached at residues N2469, N2502, N2541, N2606, and N2688. 2 disulfides stabilise this stretch: C2501/C2550 and C2597/C2646. 2 disulfides stabilise this stretch: C2695/C2744 and C2806/C2855. N2892 carries N-linked (GlcNAc...) asparagine glycosylation. C2901 and C2950 are disulfide-bonded. N2986 carries an N-linked (GlcNAc...) asparagine glycan. 5 disulfide bridges follow: C2993/C3042, C3088/C3137, C3180/C3229, C3273/C3324, and C3369/C3418. Residue N3430 is glycosylated (N-linked (GlcNAc...) asparagine). 3 disulfide bridges follow: C3462–C3507, C3551–C3593, and C3637–C3686. N3560 and N3575 each carry an N-linked (GlcNAc...) asparagine glycan. 2 N-linked (GlcNAc...) asparagine glycosylation sites follow: N3717 and N3721. C3728 and C3777 are joined by a disulfide. N-linked (GlcNAc...) asparagine glycosylation occurs at N3806. Disulfide bonds link C3819-C3870, C3912-C3961, C4003-C4051, C4093-C4142, C4184-C4231, C4274-C4322, and C4364-C4412. The N-linked (GlcNAc...) asparagine glycan is linked to N4304. Residues 4432 to 4654 form the Nidogen G2 beta-barrel domain; that stretch reads EPRGSRGSMT…QTEENEVGCP (223 aa). 2 N-linked (GlcNAc...) asparagine glycosylation sites follow: N4455 and N4601. The 41-residue stretch at 4668–4708 folds into the EGF-like 1; calcium-binding domain; sequence DKDECSGGPSPCSHTCRNAPGHFSCSCPTGFSLAWDHRNCR. Cystine bridges form between C4672-C4683, C4679-C4692, C4694-C4707, C4713-C4726, C4720-C4735, C4739-C4752, C4758-C4771, C4765-C4780, C4801-C4812, C4808-C4821, and C4823-C4836. Residues 4709–4753 form the EGF-like 2; calcium-binding domain; sequence DVDECAGNTHLCQEEQRCVNLLGSYNCLASCRPGFRVTADGSNCE. Residues 4754-4789 form the EGF-like 3; calcium-binding domain; the sequence is DVDECLEQLDECHYNQLCENTPGGHHCGCPRGYRQQ. The EGF-like 4; calcium-binding domain occupies 4797-4837; it reads DINECLQLPTPCVYQCQNLQGSYRCLCPPGQTLLRDGRTCI. The N-linked (GlcNAc...) asparagine glycan is linked to N4845. Residues 4904-4943 form the EGF-like 5; calcium-binding domain; it reads DLDECRVRSLCQHACQNTEGSYYCLCPSGYRLLPSGKNCQ. Cystine bridges form between C4908–C4918, C4914–C4927, and C4929–C4942. N5035 carries N-linked (GlcNAc...) asparagine glycosylation.

Reported to be phosphorylated; however as this position is extracellular, the in vivo relevance is unsure. As to expression, in neonatal skin, localized in the pericellular space of basal epidermal keratinocytes (at protein level). In adult skin, restricted to basal keratinocytes of hair follicles and the interfollicular epidermis. Absent from the myotendinous junction but present in skeletal muscle (at protein level). Expressed in the pericellular extracellular matrix of epithelial cells in a number of tissues including embryonic trophectoderm and adult skin and tongue. Also present in the extracellular matrix of some, but not all, blood vessels. Expressed primarily in epithelial cells in the embryonic epidermis, lung, intestine, skeletal hindlimb muscle, tongue and the muscular layers of the esophagus.

Its subcellular location is the secreted. It is found in the extracellular space. The protein resides in the extracellular matrix. The protein localises to the cleavage furrow. This Mus musculus (Mouse) protein is Hemicentin-2 (Hmcn2).